The following is a 347-amino-acid chain: Gas vesicle ATPase GvpN (347 aa).

The interval Met1 to Thr50 is disordered. A compositionally biased stretch (basic and acidic residues) spans Ser18–Gln42. Position 91–98 (Gly91–Thr98) interacts with ATP.

This sequence belongs to the CbbQ/NirQ/NorQ/GpvN family. As to quaternary structure, forms homodimers, a GvpN-GvpO heterodimer, interacts with GvpC and GvpL, might interact with GvpA.

Its subcellular location is the gas vesicle. It localises to the cytoplasm. It carries out the reaction ATP + H2O = ADP + phosphate + H(+). Its function is as follows. An ATPase that functions in gas vesicle formation. A minor component of the gas vesicle, also found in soluble extracts. Gas vesicles are hollow, gas filled proteinaceous nanostructures found in some microorganisms. They allow positioning of halobacteria at the optimal depth for growth in the poorly aerated, shallow brine pools of their habitat. Functionally, expression of a 9.5 kb mc-vac DNA fragment containing 2 divergently transcribed regions (gvpD-gvpE-gvpF-gvpG-gvpH-gvpI-gvpJ-gvpK-gvpL-gvpM and gvpA-gvpC-gvpN-gvpO) allows H.volcanii to produce gas vesicles. The chain is Gas vesicle ATPase GvpN from Haloferax mediterranei (strain ATCC 33500 / DSM 1411 / JCM 8866 / NBRC 14739 / NCIMB 2177 / R-4) (Halobacterium mediterranei).